The following is a 454-amino-acid chain: Protein IQ-DOMAIN 1 (454 aa).

Residues 103–113 form a calmodulin-binding region; it reads GKSKEEAAAIL. An IQ domain is found at 107–136; the sequence is EEAAAILIQSTFRGHLARRESQVMRGQERL. The segment at 272 to 454 is disordered; sequence WESSEKEQNT…KGVLKAERTP (183 aa). Residues 280–328 show a composition bias toward polar residues; sequence NTTNNDNSSVKNSTNRNSQGGETAKSSNRNKLNSSTKPNTPSASSTATR. The segment covering 343 to 356 has biased composition (basic and acidic residues); the sequence is KSSDDEAKSSERNR. Positions 371-388 are enriched in polar residues; it reads LSSSTARRSSNLIPTTKS. The span at 397–412 shows a compositional bias: low complexity; that stretch reads TSSRVAVTTSTTEESS. The short motif at 421–428 is the Nuclear localization signal element; it reads KKRLSTSA. Positions 442–454 are enriched in basic and acidic residues; it reads KVEKGVLKAERTP.

This sequence belongs to the IQD family. In terms of assembly, binds to multiple calmodulin (CaM) in the presence of Ca(2+)(e.g. CaM1 and CaM2) and CaM-like (e.g. CML8 and CML9) proteins. Interacts with KLCR1. Expressed in roots, flowers, stems, siliques, inflorescence stems and whole shoots. Restricted to the vascular bundles.

Its subcellular location is the nucleus. The protein resides in the nucleolus. The protein localises to the cytoplasm. It localises to the cytoskeleton. In terms of biological role, may be involved in cooperative interactions with calmodulins or calmodulin-like proteins. Modulates expression of glucosinolate pathway genes. May associate with nucleic acids and regulate gene expression at the transcriptional or post-transcriptional level. Recruits KLCR1 and calmodulin proteins to microtubules, thus being a potential scaffold in cellular signaling and trafficking. The polypeptide is Protein IQ-DOMAIN 1 (Arabidopsis thaliana (Mouse-ear cress)).